A 440-amino-acid polypeptide reads, in one-letter code: tRNA (guanine(37)-N(1))-methyltransferase (440 aa).

S-adenosyl-L-methionine-binding positions include His217, 255-256, 283-284, and Asn315; these read DL and DG.

This sequence belongs to the class I-like SAM-binding methyltransferase superfamily. TRM5/TYW2 family. In terms of assembly, monomer.

It localises to the mitochondrion matrix. It is found in the nucleus. The protein localises to the cytoplasm. The catalysed reaction is guanosine(37) in tRNA + S-adenosyl-L-methionine = N(1)-methylguanosine(37) in tRNA + S-adenosyl-L-homocysteine + H(+). Functionally, specifically methylates the N1 position of guanosine-37 in various cytoplasmic and mitochondrial tRNAs. Methylation is not dependent on the nature of the nucleoside 5' of the target nucleoside. This is the first step in the biosynthesis of wybutosine (yW), a modified base adjacent to the anticodon of tRNAs and required for accurate decoding. This is tRNA (guanine(37)-N(1))-methyltransferase from Drosophila pseudoobscura pseudoobscura (Fruit fly).